The chain runs to 82 residues: Consomatin Ro2 (82 aa).

An N-terminal signal peptide occupies residues 1–22 (MQTAYWLMVMMMVWITAPLYEG). Residues 23–57 (GKPNDVIRGLVPDDLTPQFILRSLISRRRSDKDVR) constitute a propeptide that is removed on maturation. Residues C62 and C68 are joined by a disulfide bond. W64 is modified (D-tryptophan). A 4-hydroxyproline mark is found at P69 and P70. Residues 72 to 82 (LWRRHDRKGKD) constitute a propeptide that is removed on maturation.

It belongs to the conotoxin C superfamily. Consomatin family. Expressed by the venom duct.

It localises to the secreted. In terms of biological role, moderately activates human somatostatin receptors (SSTR) with a preferential activation of SSTR1 and SSTR4. In vivo, does not cause behavioral changes in mice within a few minutes of intracranial injection, but causes a progressive loss of movement thereafter. Four to five hours after injection, mice recover, even with the highest dose tested. Shows antinociception and antihyperalgesia activities in two mouse models of acute pain, most probably by acting outside the central nervous system. This chain is Consomatin Ro2, found in Conus rolani (Cone snail).